The sequence spans 466 residues: 3-isopropylmalate dehydratase large subunit (466 aa).

The [4Fe-4S] cluster site is built by Cys-347, Cys-407, and Cys-410.

This sequence belongs to the aconitase/IPM isomerase family. LeuC type 1 subfamily. As to quaternary structure, heterodimer of LeuC and LeuD. Requires [4Fe-4S] cluster as cofactor.

The enzyme catalyses (2R,3S)-3-isopropylmalate = (2S)-2-isopropylmalate. It functions in the pathway amino-acid biosynthesis; L-leucine biosynthesis; L-leucine from 3-methyl-2-oxobutanoate: step 2/4. Its function is as follows. Catalyzes the isomerization between 2-isopropylmalate and 3-isopropylmalate, via the formation of 2-isopropylmaleate. This chain is 3-isopropylmalate dehydratase large subunit, found in Vibrio vulnificus (strain CMCP6).